Here is a 511-residue protein sequence, read N- to C-terminus: Maturase K (511 aa).

The protein belongs to the intron maturase 2 family. MatK subfamily.

The protein localises to the plastid. The protein resides in the chloroplast. Its function is as follows. Usually encoded in the trnK tRNA gene intron. Probably assists in splicing its own and other chloroplast group II introns. This is Maturase K from Avena sativa (Oat).